Here is a 212-residue protein sequence, read N- to C-terminus: Probable GTP-binding protein EngB (212 aa).

The region spanning 38–210 (SLPEIAFVGK…KASLAKCIKP (173 aa)) is the EngB-type G domain. Residues 46–53 (GKSNVGKS), 73–77 (GRTRQ), 91–94 (DLPG), 158–161 (TKSD), and 189–191 (VSN) contribute to the GTP site. S53 and T75 together coordinate Mg(2+).

This sequence belongs to the TRAFAC class TrmE-Era-EngA-EngB-Septin-like GTPase superfamily. EngB GTPase family. Mg(2+) serves as cofactor.

Functionally, necessary for normal cell division and for the maintenance of normal septation. The sequence is that of Probable GTP-binding protein EngB from Rickettsia africae (strain ESF-5).